An 878-amino-acid chain; its full sequence is Alanine--tRNA ligase (878 aa).

Zn(2+) contacts are provided by His562, His566, Cys670, and His674.

It belongs to the class-II aminoacyl-tRNA synthetase family. Requires Zn(2+) as cofactor.

It is found in the cytoplasm. It carries out the reaction tRNA(Ala) + L-alanine + ATP = L-alanyl-tRNA(Ala) + AMP + diphosphate. Functionally, catalyzes the attachment of alanine to tRNA(Ala) in a two-step reaction: alanine is first activated by ATP to form Ala-AMP and then transferred to the acceptor end of tRNA(Ala). Also edits incorrectly charged Ser-tRNA(Ala) and Gly-tRNA(Ala) via its editing domain. This chain is Alanine--tRNA ligase, found in Acinetobacter baumannii (strain ACICU).